We begin with the raw amino-acid sequence, 79 residues long: uncharacterized protein (79 aa).

The protein resides in the mitochondrion. This is an uncharacterized protein from Oenothera berteroana (Bertero's evening primrose).